A 188-amino-acid polypeptide reads, in one-letter code: Elongation factor P (188 aa).

This sequence belongs to the elongation factor P family.

It is found in the cytoplasm. It functions in the pathway protein biosynthesis; polypeptide chain elongation. In terms of biological role, involved in peptide bond synthesis. Stimulates efficient translation and peptide-bond synthesis on native or reconstituted 70S ribosomes in vitro. Probably functions indirectly by altering the affinity of the ribosome for aminoacyl-tRNA, thus increasing their reactivity as acceptors for peptidyl transferase. This is Elongation factor P from Rhodopseudomonas palustris (strain TIE-1).